The primary structure comprises 106 residues: ATP-dependent Clp protease adapter protein ClpS (106 aa).

Residues 1 to 22 are disordered; it reads MNEYHNSLKSKESVKDERQQKL. The segment covering 9-20 has biased composition (basic and acidic residues); sequence KSKESVKDERQQ.

The protein belongs to the ClpS family. Binds to the N-terminal domain of the chaperone ClpA.

Functionally, involved in the modulation of the specificity of the ClpAP-mediated ATP-dependent protein degradation. The sequence is that of ATP-dependent Clp protease adapter protein ClpS from Photorhabdus laumondii subsp. laumondii (strain DSM 15139 / CIP 105565 / TT01) (Photorhabdus luminescens subsp. laumondii).